The chain runs to 685 residues: Translation initiation factor IF-2 (685 aa).

The disordered stretch occupies residues 60–79 (ISLAKTREPSKEKTEAKKPP). Over residues 64–79 (KTREPSKEKTEAKKPP) the composition is skewed to basic and acidic residues. A tr-type G domain is found at 175-352 (NRPPVVTVMG…DIRCIPDSPV (178 aa)). Positions 184–191 (GHVDHGKT) are G1. Residue 184–191 (GHVDHGKT) coordinates GTP. The segment at 209–213 (GITQS) is G2. The interval 230 to 233 (DTPG) is G3. Residues 230–234 (DTPGH) and 284–287 (NKID) each bind GTP. Positions 284 to 287 (NKID) are G4. Residues 321–323 (SAR) form a G5 region.

It belongs to the TRAFAC class translation factor GTPase superfamily. Classic translation factor GTPase family. IF-2 subfamily.

The protein localises to the cytoplasm. Functionally, one of the essential components for the initiation of protein synthesis. Protects formylmethionyl-tRNA from spontaneous hydrolysis and promotes its binding to the 30S ribosomal subunits. Also involved in the hydrolysis of GTP during the formation of the 70S ribosomal complex. This is Translation initiation factor IF-2 from Fervidobacterium nodosum (strain ATCC 35602 / DSM 5306 / Rt17-B1).